A 53-amino-acid chain; its full sequence is Large ribosomal subunit protein bL33 (53 aa).

Belongs to the bacterial ribosomal protein bL33 family.

The chain is Large ribosomal subunit protein bL33 from Ureaplasma parvum serovar 3 (strain ATCC 27815 / 27 / NCTC 11736).